The primary structure comprises 529 residues: Neuronal acetylcholine receptor subunit alpha-2 (529 aa).

The N-terminal stretch at Met1–Gly26 is a signal peptide. Residues Glu27–Thr56 form a disordered region. Topologically, residues Glu27–Leu264 are extracellular. N-linked (GlcNAc...) asparagine glycans are attached at residues Asn79 and Asn129. Cys183 and Cys197 are joined by a disulfide. Residue Asn235 is glycosylated (N-linked (GlcNAc...) asparagine). Cys247 and Cys248 are oxidised to a cystine. The next 3 membrane-spanning stretches (helical) occupy residues Pro265 to Leu289, Ile297 to Thr315, and Tyr331 to Val352. Topologically, residues His353 to Arg502 are cytoplasmic. The helical transmembrane segment at Ile503–Leu521 threads the bilayer.

Belongs to the ligand-gated ion channel (TC 1.A.9) family. Acetylcholine receptor (TC 1.A.9.1) subfamily. Alpha-2/CHRNA2 sub-subfamily. In terms of assembly, neuronal AChR is composed of two different types of subunits: alpha and non-alpha (beta). CHRNA2/alpha-2 subunit can be combined to CHRNB2/beta-2 or CHRNB4/beta-4 to give rise to functional receptors. Both CHRNA2:CHRNB2 and CHRNA2:CHRNB4 nAChR complexes are heteropentamers with two subtypes: LS (low agonist sensitivity) with a (CHRNA2)3:(CHRNB2/4)2 and HS (high agonist sensitivity) with a (CHRNA2)2:(CHRNB2/4)3 stoichiometries; the subtypes differ in their subunit binding interfaces which are involved in ligand binding.

Its subcellular location is the synaptic cell membrane. The protein localises to the cell membrane. The enzyme catalyses Ca(2+)(in) = Ca(2+)(out). It catalyses the reaction K(+)(in) = K(+)(out). The catalysed reaction is Na(+)(in) = Na(+)(out). Component of neuronal acetylcholine receptors (nAChRs) that function as pentameric, ligand-gated cation channels with high calcium permeability among other activities. nAChRs are excitatory neurotrasnmitter receptors formed by a collection of nAChR subunits known to mediate synaptic transmission in the nervous system and the neuromuscular junction. Each nAchR subunit confers differential attributes to channel properties, including activation, deactivation and desensitization kinetics, pH sensitivity, cation permeability, and binding to allosteric modulators. CHRNA2 forms heteropentameric neuronal acetylcholine receptors with CHRNB2 and CHRNB4 and plays a role in nicotine dependence. This Homo sapiens (Human) protein is Neuronal acetylcholine receptor subunit alpha-2.